Reading from the N-terminus, the 385-residue chain is Ribosomal RNA large subunit methyltransferase G (385 aa).

Belongs to the methyltransferase superfamily. RlmG family.

Its subcellular location is the cytoplasm. The catalysed reaction is guanosine(1835) in 23S rRNA + S-adenosyl-L-methionine = N(2)-methylguanosine(1835) in 23S rRNA + S-adenosyl-L-homocysteine + H(+). Specifically methylates the guanine in position 1835 (m2G1835) of 23S rRNA. The chain is Ribosomal RNA large subunit methyltransferase G from Vibrio parahaemolyticus serotype O3:K6 (strain RIMD 2210633).